A 168-amino-acid chain; its full sequence is Mediator of RNA polymerase II transcription subunit 7b (168 aa).

Residues 1–12 (MATATYPPPPPY) show a composition bias toward pro residues. Residues 1 to 33 (MATATYPPPPPYYRLYKDFSENTDSAPEPPPPI) form a disordered region. 2 coiled-coil regions span residues 64–92 (KDSN…ADVL) and 132–162 (IMEL…KDAF).

Belongs to the Mediator complex subunit 7 family. Component of the Mediator complex. Interacts with MEE14/CBP1.

The protein localises to the nucleus. In terms of biological role, component of the Mediator complex, a coactivator involved in the regulated transcription of nearly all RNA polymerase II-dependent genes. Mediator functions as a bridge to convey information from gene-specific regulatory proteins to the basal RNA polymerase II transcription machinery. The Mediator complex, having a compact conformation in its free form, is recruited to promoters by direct interactions with regulatory proteins and serves for the assembly of a functional pre-initiation complex with RNA polymerase II and the general transcription factors. The polypeptide is Mediator of RNA polymerase II transcription subunit 7b (MED7B) (Arabidopsis thaliana (Mouse-ear cress)).